The following is a 151-amino-acid chain: Acidic phospholipase A2 1 (151 aa).

Residues 1-21 form the signal peptide; sequence MNPAHLLVLSAVCVSLLGASS. Positions 22–27 are excised as a propeptide; the sequence is IPPQPL. Cystine bridges form between C38–C104, C54–C151, C56–C72, C71–C132, C78–C125, C88–C118, and C111–C123. Ca(2+) contacts are provided by Y55, G57, and G59. The active site involves H75. D76 provides a ligand contact to Ca(2+). D126 is an active-site residue.

It depends on Ca(2+) as a cofactor. Expressed by the venom gland.

The protein localises to the secreted. It carries out the reaction a 1,2-diacyl-sn-glycero-3-phosphocholine + H2O = a 1-acyl-sn-glycero-3-phosphocholine + a fatty acid + H(+). Functionally, snake venom phospholipase A2 (PLA2) that may exhibit cardiotoxicity, myotoxicity, antiplatelet activity, and edema-inducing activity. PLA2 catalyzes the calcium-dependent hydrolysis of the 2-acyl groups in 3-sn-phosphoglycerides. This is Acidic phospholipase A2 1 from Ophiophagus hannah (King cobra).